A 348-amino-acid polypeptide reads, in one-letter code: Protein RecA (348 aa).

Gly-69–Thr-76 provides a ligand contact to ATP.

This sequence belongs to the RecA family.

Its subcellular location is the cytoplasm. Can catalyze the hydrolysis of ATP in the presence of single-stranded DNA, the ATP-dependent uptake of single-stranded DNA by duplex DNA, and the ATP-dependent hybridization of homologous single-stranded DNAs. It interacts with LexA causing its activation and leading to its autocatalytic cleavage. In Picosynechococcus sp. (strain ATCC 27264 / PCC 7002 / PR-6) (Agmenellum quadruplicatum), this protein is Protein RecA.